The chain runs to 592 residues: Zinc metalloproteinase dpy-31 (592 aa).

A signal peptide spans methionine 1 to serine 18. A propeptide spanning residues leucine 19–lysine 127 is cleaved from the precursor. Residues leucine 22–glutamate 46 are disordered. One can recognise a Peptidase M12A domain in the interval lysine 127–serine 326. Asparagine 167 is a glycosylation site (N-linked (GlcNAc...) asparagine). Intrachain disulfides connect cysteine 170–cysteine 325 and cysteine 193–cysteine 214. A Zn(2+)-binding site is contributed by histidine 222. The active site involves glutamate 223. Zn(2+) is bound by residues histidine 226 and histidine 232. One can recognise an EGF-like domain in the interval cysteine 349–glutamate 361. An intrachain disulfide couples cysteine 371 to cysteine 399. One can recognise a CUB domain in the interval cysteine 371–valine 487. An N-linked (GlcNAc...) asparagine glycan is attached at asparagine 438. The TSP type-1 domain maps to alanine 490–threonine 540. 3 cysteine pairs are disulfide-bonded: cysteine 502/cysteine 534, cysteine 506/cysteine 539, and cysteine 518/cysteine 524.

The cofactor is Zn(2+). As to expression, expressed in hypodermis, rectal and vulval epithelial cells and amphid socket cells.

It is found in the secreted. Functionally, metalloprotease which cleaves the carboxyl terminus of procollagens, such as sqt-3, to mature collagens. Involved in cuticular collagen maturation. This is Zinc metalloproteinase dpy-31 from Caenorhabditis elegans.